Consider the following 73-residue polypeptide: Large ribosomal subunit protein bL31 (73 aa).

The protein belongs to the bacterial ribosomal protein bL31 family. Type A subfamily. As to quaternary structure, part of the 50S ribosomal subunit.

Functionally, binds the 23S rRNA. The chain is Large ribosomal subunit protein bL31 from Brucella abortus (strain 2308).